The primary structure comprises 306 residues: Pantothenate kinase (306 aa).

91–98 (GSVAVGKS) contacts ATP.

This sequence belongs to the prokaryotic pantothenate kinase family.

It is found in the cytoplasm. The enzyme catalyses (R)-pantothenate + ATP = (R)-4'-phosphopantothenate + ADP + H(+). The protein operates within cofactor biosynthesis; coenzyme A biosynthesis; CoA from (R)-pantothenate: step 1/5. The polypeptide is Pantothenate kinase (Streptococcus pyogenes serotype M12 (strain MGAS2096)).